A 105-amino-acid chain; its full sequence is Large ribosomal subunit protein uL24 (105 aa).

It belongs to the universal ribosomal protein uL24 family. In terms of assembly, part of the 50S ribosomal subunit.

In terms of biological role, one of two assembly initiator proteins, it binds directly to the 5'-end of the 23S rRNA, where it nucleates assembly of the 50S subunit. Functionally, one of the proteins that surrounds the polypeptide exit tunnel on the outside of the subunit. In Vibrio vulnificus (strain YJ016), this protein is Large ribosomal subunit protein uL24.